Reading from the N-terminus, the 23-residue chain is Septenin 2b (23 aa).

Expressed in skin glands.

Its subcellular location is the secreted. In terms of biological role, may act as an antimicrobial peptide. This is Septenin 2b from Osteopilus septentrionalis (Cuban treefrog).